Reading from the N-terminus, the 336-residue chain is N-acetyl-gamma-glutamyl-phosphate reductase (336 aa).

The active site involves C143.

It belongs to the NAGSA dehydrogenase family. Type 1 subfamily.

The protein localises to the cytoplasm. The catalysed reaction is N-acetyl-L-glutamate 5-semialdehyde + phosphate + NADP(+) = N-acetyl-L-glutamyl 5-phosphate + NADPH + H(+). It participates in amino-acid biosynthesis; L-arginine biosynthesis; N(2)-acetyl-L-ornithine from L-glutamate: step 3/4. Catalyzes the NADPH-dependent reduction of N-acetyl-5-glutamyl phosphate to yield N-acetyl-L-glutamate 5-semialdehyde. In Dictyoglomus thermophilum (strain ATCC 35947 / DSM 3960 / H-6-12), this protein is N-acetyl-gamma-glutamyl-phosphate reductase.